A 480-amino-acid chain; its full sequence is Glutamyl-tRNA(Gln) amidotransferase subunit A (480 aa).

Active-site charge relay system residues include K74 and S149. The Acyl-ester intermediate role is filled by S173.

This sequence belongs to the amidase family. GatA subfamily. In terms of assembly, heterotrimer of A, B and C subunits.

It carries out the reaction L-glutamyl-tRNA(Gln) + L-glutamine + ATP + H2O = L-glutaminyl-tRNA(Gln) + L-glutamate + ADP + phosphate + H(+). Its function is as follows. Allows the formation of correctly charged Gln-tRNA(Gln) through the transamidation of misacylated Glu-tRNA(Gln) in organisms which lack glutaminyl-tRNA synthetase. The reaction takes place in the presence of glutamine and ATP through an activated gamma-phospho-Glu-tRNA(Gln). The polypeptide is Glutamyl-tRNA(Gln) amidotransferase subunit A (Vesicomyosocius okutanii subsp. Calyptogena okutanii (strain HA)).